The following is a 379-amino-acid chain: Queuine tRNA-ribosyltransferase (379 aa).

The active-site Proton acceptor is the Asp-94. Substrate-binding positions include 94–98, Asp-148, Gln-191, and Gly-218; that span reads DSGGF. Residues 249–255 form an RNA binding region; it reads GVGSPDS. The active-site Nucleophile is the Asp-268. The tract at residues 273–277 is RNA binding; important for wobble base 34 recognition; sequence TRIGR. The Zn(2+) site is built by Cys-306, Cys-308, Cys-311, and His-337.

The protein belongs to the queuine tRNA-ribosyltransferase family. Homodimer. Within each dimer, one monomer is responsible for RNA recognition and catalysis, while the other monomer binds to the replacement base PreQ1. The cofactor is Zn(2+).

The catalysed reaction is 7-aminomethyl-7-carbaguanine + guanosine(34) in tRNA = 7-aminomethyl-7-carbaguanosine(34) in tRNA + guanine. It participates in tRNA modification; tRNA-queuosine biosynthesis. Functionally, catalyzes the base-exchange of a guanine (G) residue with the queuine precursor 7-aminomethyl-7-deazaguanine (PreQ1) at position 34 (anticodon wobble position) in tRNAs with GU(N) anticodons (tRNA-Asp, -Asn, -His and -Tyr). Catalysis occurs through a double-displacement mechanism. The nucleophile active site attacks the C1' of nucleotide 34 to detach the guanine base from the RNA, forming a covalent enzyme-RNA intermediate. The proton acceptor active site deprotonates the incoming PreQ1, allowing a nucleophilic attack on the C1' of the ribose to form the product. After dissociation, two additional enzymatic reactions on the tRNA convert PreQ1 to queuine (Q), resulting in the hypermodified nucleoside queuosine (7-(((4,5-cis-dihydroxy-2-cyclopenten-1-yl)amino)methyl)-7-deazaguanosine). The protein is Queuine tRNA-ribosyltransferase of Anoxybacillus flavithermus (strain DSM 21510 / WK1).